The sequence spans 230 residues: PsbP-like protein 1, chloroplastic (230 aa).

It belongs to the PsbP family.

The protein resides in the plastid. The protein localises to the chloroplast thylakoid lumen. In terms of biological role, required for efficient repair of photodamaged PSII, but not tightly associated with the complex. This Arabidopsis thaliana (Mouse-ear cress) protein is PsbP-like protein 1, chloroplastic (PPL1).